Here is an 89-residue protein sequence, read N- to C-terminus: Small ribosomal subunit protein uS15 (89 aa).

Belongs to the universal ribosomal protein uS15 family. As to quaternary structure, part of the 30S ribosomal subunit. Forms a bridge to the 50S subunit in the 70S ribosome, contacting the 23S rRNA.

In terms of biological role, one of the primary rRNA binding proteins, it binds directly to 16S rRNA where it helps nucleate assembly of the platform of the 30S subunit by binding and bridging several RNA helices of the 16S rRNA. Its function is as follows. Forms an intersubunit bridge (bridge B4) with the 23S rRNA of the 50S subunit in the ribosome. This is Small ribosomal subunit protein uS15 from Burkholderia mallei (strain NCTC 10247).